Consider the following 478-residue polypeptide: Cysteine--tRNA ligase (478 aa).

Cysteine 29 contacts Zn(2+). The 'HIGH' region motif lies at 31–41; sequence ATVQSIPHIGH. Positions 207, 232, and 236 each coordinate Zn(2+). Residues 263-267 carry the 'KMSKS' region motif; that stretch reads KMSKS. Residue lysine 266 coordinates ATP.

This sequence belongs to the class-I aminoacyl-tRNA synthetase family. Monomer. The cofactor is Zn(2+).

It localises to the cytoplasm. The enzyme catalyses tRNA(Cys) + L-cysteine + ATP = L-cysteinyl-tRNA(Cys) + AMP + diphosphate. The sequence is that of Cysteine--tRNA ligase from Corynebacterium jeikeium (strain K411).